A 175-amino-acid polypeptide reads, in one-letter code: NADH-ubiquinone oxidoreductase chain 6 (175 aa).

Transmembrane regions (helical) follow at residues 1–21 (MMTYIAFILSTILVVSFVGFS), 25–45 (SPIYGGLGLIVSGGVGCGIVL), 48–68 (GGSFLGLMVFLIYLGGMLVVF), 88–108 (TVLSLFVLGFMAELLFAGYCI), and 149–169 (YGTWLVIVTGWSLVIGVLVVM).

The protein belongs to the complex I subunit 6 family. In terms of assembly, core subunit of respiratory chain NADH dehydrogenase (Complex I) which is composed of 45 different subunits.

The protein localises to the mitochondrion inner membrane. The enzyme catalyses a ubiquinone + NADH + 5 H(+)(in) = a ubiquinol + NAD(+) + 4 H(+)(out). Its function is as follows. Core subunit of the mitochondrial membrane respiratory chain NADH dehydrogenase (Complex I) which catalyzes electron transfer from NADH through the respiratory chain, using ubiquinone as an electron acceptor. Essential for the catalytic activity and assembly of complex I. This is NADH-ubiquinone oxidoreductase chain 6 (MT-ND6) from Urotrichus talpoides (Japanese shrew mole).